A 282-amino-acid chain; its full sequence is 2-dehydro-3-deoxyphosphooctonate aldolase (282 aa).

It belongs to the KdsA family.

Its subcellular location is the cytoplasm. It catalyses the reaction D-arabinose 5-phosphate + phosphoenolpyruvate + H2O = 3-deoxy-alpha-D-manno-2-octulosonate-8-phosphate + phosphate. The protein operates within carbohydrate biosynthesis; 3-deoxy-D-manno-octulosonate biosynthesis; 3-deoxy-D-manno-octulosonate from D-ribulose 5-phosphate: step 2/3. It functions in the pathway bacterial outer membrane biogenesis; lipopolysaccharide biosynthesis. This is 2-dehydro-3-deoxyphosphooctonate aldolase from Shewanella woodyi (strain ATCC 51908 / MS32).